The chain runs to 350 residues: Cilia- and flagella-associated protein 36 (350 aa).

The stretch at 142–167 (SELEQQEMKILQEVLRRSKEEYDLQM) forms a coiled coil. Disordered stretches follow at residues 171–233 (GLGS…ATTA) and 301–337 (RQTG…QKRK). Over residues 177-220 (LASTSSSVSETPQNPEQRLSNGVSDPLTLTQPDSEMEESSTATQ) the composition is skewed to polar residues. Residues 280–350 (VALQQRSEYL…EKLKEEVIKK (71 aa)) are a coiled coil.

It belongs to the CFAP36 family.

It is found in the nucleus. It localises to the cytoplasm. The protein localises to the cell projection. Its subcellular location is the cilium. The protein resides in the flagellum. The protein is Cilia- and flagella-associated protein 36 of Danio rerio (Zebrafish).